Here is a 352-residue protein sequence, read N- to C-terminus: C-C chemokine receptor type 5 (352 aa).

Topologically, residues Met-1–Ala-30 are extracellular. A Sulfotyrosine modification is found at Tyr-3. O-linked (GalNAc...) serine glycans are attached at residues Ser-6 and Ser-7. Tyr-10, Tyr-14, and Tyr-15 each carry sulfotyrosine. Intrachain disulfides connect Cys-20–Cys-269 and Cys-101–Cys-178. Residues Arg-31–Cys-58 traverse the membrane as a helical segment. Topologically, residues Lys-59–Tyr-68 are cytoplasmic. The helical transmembrane segment at Leu-69–Tyr-89 threads the bilayer. At Ala-90–Gln-102 the chain is on the extracellular side. Residues Leu-103–Ile-124 traverse the membrane as a helical segment. The Cytoplasmic segment spans residues Asp-125–Thr-141. A helical transmembrane segment spans residues Val-142–Phe-166. The Extracellular segment spans residues Thr-167–Ile-198. The helical transmembrane segment at Val-199–Leu-218 threads the bilayer. Residues Lys-219 to Arg-235 are Cytoplasmic-facing. Residues Leu-236–Phe-260 traverse the membrane as a helical segment. Topologically, residues Gln-261–Gln-277 are extracellular. A helical transmembrane segment spans residues Ala-278 to Gly-301. Residues Glu-302–Leu-352 are Cytoplasmic-facing. Residues Cys-321, Cys-323, and Cys-324 are each lipidated (S-palmitoyl cysteine). A phosphoserine; by BARK1 mark is found at Ser-336, Ser-337, Ser-342, and Ser-349.

The protein belongs to the G-protein coupled receptor 1 family. In terms of assembly, interacts with PRAF2. Efficient ligand binding to CCL3/MIP-1alpha and CCL4/MIP-1beta requires sulfation, O-glycosylation and sialic acid modifications. Glycosylation on Ser-6 is required for efficient binding of CCL4. Interacts with GRK2. Interacts with ARRB1 and ARRB2. Interacts with CNIH4. Interacts with S100A4; this interaction stimulates T-lymphocyte chemotaxis. In terms of processing, sulfated on at least 2 of the N-terminal tyrosines. Sulfation is required for efficient binding of the chemokines, CCL3 and CCL4. Palmitoylation in the C-terminal is important for cell surface expression. Post-translationally, phosphorylation on serine residues in the C-terminal is stimulated by binding CC chemokines especially by APO-RANTES. In terms of processing, O-glycosylated, but not N-glycosylated. Ser-6 appears to be the major site even if Ser-7 may be also O-glycosylated. Also sialylated glycans present which contribute to chemokine binding. Thr-16 and Ser-17 may also be glycosylated and, if so, with small moieties such as a T-antigen.

Its subcellular location is the cell membrane. Receptor for a number of inflammatory CC-chemokines including CCL3/MIP-1-alpha, CCL4/MIP-1-beta and RANTES and subsequently transduces a signal by increasing the intracellular calcium ion level. May play a role in the control of granulocytic lineage proliferation or differentiation. Participates in T-lymphocyte migration to the infection site by acting as a chemotactic receptor. This is C-C chemokine receptor type 5 (CCR5) from Erythrocebus patas (Red guenon).